The primary structure comprises 464 residues: Citrate synthase, mitochondrial (464 aa).

Residues 1-27 (MALLTAAARLFGAKNASCLVLAARHAS) constitute a mitochondrion transit peptide. The short motif at 2–21 (ALLTAAARLFGAKNASCLVL) is the SIFI-degron element. Lys76 bears the N6-acetyllysine; alternate mark. Lys76 bears the N6-succinyllysine; alternate mark. 2 positions are modified to N6-succinyllysine: Lys103 and Lys193. Ser226 carries the post-translational modification Phosphoserine. His301 is an active-site residue. Lys321 and Lys327 each carry N6-acetyllysine; alternate. 2 positions are modified to N6-succinyllysine; alternate: Lys321 and Lys327. His347 is an active-site residue. Position 356 (Arg356) interacts with oxaloacetate. At Lys375 the chain carries N6-acetyllysine; alternate. Residue Lys375 is modified to N6-succinyllysine; alternate. Residue Lys382 is modified to N6-acetyllysine. Lys393 carries the post-translational modification N6-acetyllysine; alternate. Lys393 bears the N6-succinyllysine; alternate mark. Position 395 is an N6,N6,N6-trimethyllysine (Lys395). Residue Asp402 is part of the active site. The oxaloacetate site is built by Arg428 and Arg448. An N6-succinyllysine modification is found at Lys450. Residue Lys459 is modified to N6-acetyllysine; alternate. An N6-succinyllysine; alternate modification is found at Lys459.

This sequence belongs to the citrate synthase family. As to quaternary structure, homodimer. Methylated. Trimethylation at Lys-395 by CSKMT decreases citrate synthase activity. Post-translationally, in response to mitochondrial stress, the precursor protein is ubiquitinated by the SIFI complex in the cytoplasm before mitochondrial import, leading to its degradation. Within the SIFI complex, UBR4 initiates ubiquitin chain that are further elongated or branched by KCMF1.

Its subcellular location is the mitochondrion matrix. It catalyses the reaction oxaloacetate + acetyl-CoA + H2O = citrate + CoA + H(+). Its pathway is carbohydrate metabolism; tricarboxylic acid cycle; isocitrate from oxaloacetate: step 1/2. Functionally, key enzyme of the Krebs tricarboxylic acid cycle which catalyzes the synthesis of citrate from acetyl coenzyme A and oxaloacetate. The chain is Citrate synthase, mitochondrial (CS) from Sus scrofa (Pig).